We begin with the raw amino-acid sequence, 699 residues long: MAEAEAQFPPLQDGDDFFHVGSDRCSEELRDVKQVLFQEEDDSASDYGSYKRLGKVTSRTVPAGNMLFPDLFQTNNLLFYERFETYKDYMLGDCKPSEVKEFIAEYLEKALKPSGWNAIWHTDVFDVLVEVTDVEFSSLNAIVRLSEPFLCESHVSSIALESIKDLLDVKDQRVPLQEIRVVFDESGLYNQTALAIEHLRFFYQQIWRPWDEEEEDYFDYFVRCVEPRLRLHYDILEDRIPSGLVAEYSSLLLQCEEVYMQFTNLRNNLSNKDSDSESELDNVSMVEGMKMDNEMENLKRKLKLIENPLLRYLFCYQRNSGCHNVQAKGPRPNGGKVIHVVSTSMSILTLQCLTRERLQPESGNKDLEIQFHRDPLEAVNACYEGDLVIICPGLYAVYGLINIMDSIEIEGYGLPDDVVIEKMGKGDTFVACSGAHIKISNVKFVQHEAVEGIITIHSGKTELDNCVLQCETTGVTVKKSAELLMKYSDLYGAKGAGMEIYPGSKCTLIGNGIHHCRDGILIKDFIDVVCEIPKITMENNVIHNNEGYAVVLVKPSLDIEKNSHNEELEGGHLDDDDKMIEEQTSSNILQPNLNKAMGVEDKAVEHTNNLEKDQGNLAIAKEEVECEYAIDCEEAEGNQVIATELVANTRRKTKLHKKRLSTLGIVTADDKLTSQEIFVSIVGNQFKRNGKGTFGTFLF.

3 PbH1 repeats span residues 480–502 (SAEL…EIYP), 503–524 (GSKC…LIKD), and 532–554 (IPKI…VLVK). Positions 603-627 (AVEHTNNLEKDQGNLAIAKEEVECE) form a coiled coil.

The protein localises to the midbody. The protein resides in the cytoplasm. It is found in the cytoskeleton. Its subcellular location is the spindle. Functionally, may play a role in signaling pathways governing cellular proliferation. This chain is SHC SH2 domain-binding protein 1 homolog A (shcbp1-a), found in Xenopus laevis (African clawed frog).